Reading from the N-terminus, the 202-residue chain is Small ribosomal subunit protein uS4c (202 aa).

Positions 90–153 (MRLDNIIFRL…KSETIISKNI (64 aa)) constitute an S4 RNA-binding domain.

Belongs to the universal ribosomal protein uS4 family. Part of the 30S ribosomal subunit. Contacts protein S5. The interaction surface between S4 and S5 is involved in control of translational fidelity.

The protein localises to the plastid. It is found in the chloroplast. One of the primary rRNA binding proteins, it binds directly to 16S rRNA where it nucleates assembly of the body of the 30S subunit. In terms of biological role, with S5 and S12 plays an important role in translational accuracy. In Catharomnion ciliatum (Moss), this protein is Small ribosomal subunit protein uS4c (rps4).